The following is a 418-amino-acid chain: Tyrosine--tRNA ligase (418 aa).

L-tyrosine is bound at residue Tyr34. The 'HIGH' region signature appears at 39 to 48 (PTADSLHLGH). L-tyrosine is bound by residues Tyr169 and Gln173. Positions 229–233 (KFGKS) match the 'KMSKS' region motif. Lys232 serves as a coordination point for ATP. One can recognise an S4 RNA-binding domain in the interval 352 to 418 (NNIVELLVSS…GKKKYFVLTY (67 aa)).

This sequence belongs to the class-I aminoacyl-tRNA synthetase family. TyrS type 1 subfamily. As to quaternary structure, homodimer.

The protein localises to the cytoplasm. The catalysed reaction is tRNA(Tyr) + L-tyrosine + ATP = L-tyrosyl-tRNA(Tyr) + AMP + diphosphate + H(+). Its function is as follows. Catalyzes the attachment of tyrosine to tRNA(Tyr) in a two-step reaction: tyrosine is first activated by ATP to form Tyr-AMP and then transferred to the acceptor end of tRNA(Tyr). This Streptococcus pneumoniae (strain 70585) protein is Tyrosine--tRNA ligase.